The following is a 268-amino-acid chain: Mesoderm posterior protein 1 (268 aa).

The segment at 17 to 93 (AAWGPTRRPP…RQSASEREKL (77 aa)) is disordered. Polar residues predominate over residues 36-48 (LVSSPDSWGSTPA). Positions 66 to 86 (APSVGRRGARSSRLGSGQRQS) are enriched in low complexity. The bHLH domain maps to 82–136 (GQRQSASEREKLRMRTLARALHELRRFLPPSVAPAGQSLTKIETLRLAIRYIGHL). Residues 163 to 167 (CPLCP) carry the CPLCP motif. Repeat copies occupy residues 182–183 (GQ) and 184–185 (GQ). The interval 182-185 (GQGQ) is 2 X 2 AA tandem repeats of G-Q.

It localises to the nucleus. Transcription factor. Plays a role in the epithelialization of somitic mesoderm and in the development of cardiac mesoderm. Defines the rostrocaudal patterning of the somites by participating in distinct Notch pathways. The chain is Mesoderm posterior protein 1 (MESP1) from Homo sapiens (Human).